The primary structure comprises 594 residues: Glutamate decarboxylase 1 (594 aa).

Over residues Met-1–Ser-13 the composition is skewed to low complexity. Residues Met-1–Ala-22 are disordered. Ser-78 carries the post-translational modification Phosphoserine. Gln-190–Ser-192 contacts 4-aminobutanoate. An N6-(pyridoxal phosphate)lysine modification is found at Lys-405. Arg-567 contributes to the 4-aminobutanoate binding site.

Belongs to the group II decarboxylase family. As to quaternary structure, homodimer. Pyridoxal 5'-phosphate is required as a cofactor.

It catalyses the reaction L-glutamate + H(+) = 4-aminobutanoate + CO2. Functionally, catalyzes the synthesis of the inhibitory neurotransmitter gamma-aminobutyric acid (GABA) with pyridoxal 5'-phosphate as cofactor. In Canis lupus familiaris (Dog), this protein is Glutamate decarboxylase 1 (GAD1).